The following is a 282-amino-acid chain: 2-dehydro-3-deoxyphosphooctonate aldolase (282 aa).

The protein belongs to the KdsA family.

Its subcellular location is the cytoplasm. It carries out the reaction D-arabinose 5-phosphate + phosphoenolpyruvate + H2O = 3-deoxy-alpha-D-manno-2-octulosonate-8-phosphate + phosphate. It participates in carbohydrate biosynthesis; 3-deoxy-D-manno-octulosonate biosynthesis; 3-deoxy-D-manno-octulosonate from D-ribulose 5-phosphate: step 2/3. Its pathway is bacterial outer membrane biogenesis; lipopolysaccharide biosynthesis. This chain is 2-dehydro-3-deoxyphosphooctonate aldolase, found in Shewanella piezotolerans (strain WP3 / JCM 13877).